Reading from the N-terminus, the 55-residue chain is Metallothionein-3 (55 aa).

Belongs to the metallothionein superfamily. Type 11 family.

The protein is Metallothionein-3 (MTP3) of Yarrowia lipolytica (strain CLIB 122 / E 150) (Yeast).